The primary structure comprises 267 residues: MKVQTGATGVLERTSHYLKAGLLRTKPAWFDVVGAHPPSTNLTKKPKLFETGGQKSDPSESIFTKINGEYKTRTSVEDRKQKNNSVSRVPKLQFLEDQLRDVFYHQHPWEFSRPKVLVETSGDDNSKCDWSHMLQFNKPLDGESVVQRTLWLLNRSKMDGKSITLFDAYDEARFEFYRLRMEEEMSSAVSREESTMYGAVFPSPHLEHGVNQEQEYIDIWTKVAGDATKVKTASKDGKSSNGSMGAEDVVEKTTSAWETEFVEEESS.

A disordered region spans residues 230–267 (VKTASKDGKSSNGSMGAEDVVEKTTSAWETEFVEEESS).

Belongs to the mitochondrion-specific ribosomal protein mS23 family. As to quaternary structure, component of the mitochondrial small ribosomal subunit.

It localises to the mitochondrion. This Meyerozyma guilliermondii (strain ATCC 6260 / CBS 566 / DSM 6381 / JCM 1539 / NBRC 10279 / NRRL Y-324) (Yeast) protein is Small ribosomal subunit protein mS23 (RSM25).